The following is a 662-amino-acid chain: Transcription activator of gluconeogenesis NECHADRAFT_59099 (662 aa).

The tract at residues 1-61 (MPHEMEENGA…KDPLRPRRKK (61 aa)) is disordered. Composition is skewed to basic and acidic residues over residues 25–34 (TFLKDDEKMT) and 43–56 (TEVKKKYDPKDPLR). The segment at residues 66–94 (CFACQRAHLTCGDERPCQRCIKRGLADAC) is a DNA-binding region (zn(2)-C6 fungal-type). 3 disordered regions span residues 105 to 149 (LHDA…TGSN), 502 to 524 (YSGRSTNGTNTPDHNSQGEMTTP), and 580 to 606 (YRAPQDPDQKEPGSQKDAQPGILSSRV). 2 stretches are compositionally biased toward polar residues: residues 121–130 (YNPTPTPSRT) and 137–149 (SSQSDNLSATGSN). The PAS domain maps to 448-519 (TLVEYDDFLQ…TNTPDHNSQG (72 aa)). Over residues 582–593 (APQDPDQKEPGS) the composition is skewed to basic and acidic residues.

The protein belongs to the ERT1/acuK family.

It localises to the nucleus. Its function is as follows. Transcription factor which regulates nonfermentable carbon utilization. Activator of gluconeogenetic genes. This chain is Transcription activator of gluconeogenesis NECHADRAFT_59099, found in Fusarium vanettenii (strain ATCC MYA-4622 / CBS 123669 / FGSC 9596 / NRRL 45880 / 77-13-4) (Fusarium solani subsp. pisi).